An 819-amino-acid polypeptide reads, in one-letter code: DNA mismatch repair protein MutS (819 aa).

Residue 596–603 (GPNMSGKS) coordinates ATP.

Belongs to the DNA mismatch repair MutS family.

Its function is as follows. This protein is involved in the repair of mismatches in DNA. It is possible that it carries out the mismatch recognition step. This protein has a weak ATPase activity. This Thermosipho melanesiensis (strain DSM 12029 / CIP 104789 / BI429) protein is DNA mismatch repair protein MutS.